Here is a 107-residue protein sequence, read N- to C-terminus: Thioredoxin (107 aa).

Residues 2–107 (DSIVHVTDDS…QLTAFLDSNX (106 aa)) form the Thioredoxin domain. Cys32 and Cys35 form a disulfide bridge.

This sequence belongs to the thioredoxin family.

Its function is as follows. Participates in various redox reactions through the reversible oxidation of its active center dithiol to a disulfide and catalyzes dithiol-disulfide exchange reactions. The sequence is that of Thioredoxin (trxA) from Allochromatium vinosum (Chromatium vinosum).